Here is a 368-residue protein sequence, read N- to C-terminus: Protein tesmin/TSO1-like CXC 8 (368 aa).

Positions 64–185 (KHKGCRCKQS…KCINCKNVSE (122 aa)) constitute a CRC domain.

This sequence belongs to the lin-54 family.

The protein localises to the nucleus. Plays a role in development of both male and female reproductive tissues. The protein is Protein tesmin/TSO1-like CXC 8 (TCX8) of Arabidopsis thaliana (Mouse-ear cress).